Consider the following 455-residue polypeptide: J protein JJJ2 (455 aa).

Positions 12-76 (TYYSILGVPT…QLRAEYDKKL (65 aa)) constitute a J domain. A disordered region spans residues 104–241 (RNSKPYEQQP…RKKSEKKATP (138 aa)). The segment covering 133 to 144 (NSNPHNENSSNN) has biased composition (low complexity). Residues 156 to 168 (TLSKDSEDKHGTD) are compositionally biased toward basic and acidic residues.

The protein localises to the cytoplasm. The protein resides in the nucleus. The chain is J protein JJJ2 (JJJ2) from Candida glabrata (strain ATCC 2001 / BCRC 20586 / JCM 3761 / NBRC 0622 / NRRL Y-65 / CBS 138) (Yeast).